Reading from the N-terminus, the 2581-residue chain is Chromodomain-helicase-DNA-binding protein 8 (2581 aa).

5 disordered regions span residues 22-114, 253-283, 349-392, 429-582, and 596-615; these read DDSF…QTST, VKGSAPAGNPGATGPPLKPAVTLTSTPTQGE, QKIQ…SPGQ, ALSS…QVKR, and DEEEEEVDVTGPIKPEPILP. Polar residues-rich tracts occupy residues 42–51 and 94–114; these read SLDSLDQMNQ and DYTTQPASQEQPAQPVLQTST. Positions 255 to 267 are enriched in low complexity; sequence GSAPAGNPGATGP. The segment covering 355–370 has biased composition (pro residues); that stretch reads PQPPSSQPQPQQPPST. Residue Ser-432 is modified to Phosphoserine. Composition is skewed to basic and acidic residues over residues 445–462 and 493–516; these read GMEENRRLEHQKKQEKAN and RPEEEGEKKRRKKSAGERLKEEKP. 2 positions are modified to phosphoserine: Ser-553 and Ser-562. Residues 572 to 582 are compositionally biased toward basic residues; sequence QKRRSNRQVKR. Lys-609 is covalently cross-linked (Glycyl lysine isopeptide (Lys-Gly) (interchain with G-Cter in SUMO)). Chromo domains follow at residues 642-709 and 724-790; these read AIVD…AQMR and VEVD…RVNR. In terms of domain architecture, Helicase ATP-binding spans 823–997; the sequence is LFNWYNRQNC…FSLLHFLEPS (175 aa). 836–843 provides a ligand contact to ATP; that stretch reads DEMGLGKT. A DEAH box motif is present at residues 948–951; it reads DEAH. One can recognise a Helicase C-terminal domain in the interval 1137-1288; sequence LIDKLLPKLK…KAVLQSMSGR (152 aa). Phosphoserine occurs at positions 1420 and 1424. The tract at residues 1692–1712 is disordered; it reads EDPEYKPLQGPPKDQDDEGDP. The tract at residues 1789 to 2302 is interaction with FAM124B; it reads IARREKQQRW…LVELEVECME (514 aa). Phosphoserine occurs at positions 1976 and 1978. Residues 1991-2116 are disordered; it reads SRTASPLPLR…TDQSRSKLYD (126 aa). The residue at position 1993 (Thr-1993) is a Phosphothreonine. 2 positions are modified to phosphoserine: Ser-1995 and Ser-2008. A compositionally biased stretch (polar residues) spans 2011–2021; that stretch reads ETATQVPSLES. Residue Lys-2025 forms a Glycyl lysine isopeptide (Lys-Gly) (interchain with G-Cter in SUMO2) linkage. Ser-2046 carries the post-translational modification Phosphoserine. Phosphothreonine is present on Thr-2051. The span at 2064–2073 shows a compositional bias: acidic residues; it reads EDEDDSDSEL. Phosphoserine is present on residues Ser-2069 and Ser-2071. Positions 2076 to 2095 are enriched in low complexity; the sequence is SKLSPSSSSSSSSSSSSSST. Over residues 2103 to 2116 the composition is skewed to basic and acidic residues; that stretch reads EEKLTDQSRSKLYD. Ser-2182, Ser-2200, and Ser-2202 each carry phosphoserine. Positions 2189–2229 are disordered; that stretch reads GILGPGNHLLDSPSLTPGEYGDSPVPTPRSSSAASMAEEEA. At Thr-2204 the chain carries Phosphothreonine. The residue at position 2211 (Ser-2211) is a Phosphoserine. Thr-2215 is modified (phosphothreonine). A compositionally biased stretch (low complexity) spans 2218 to 2229; that stretch reads SSSAASMAEEEA. At Ser-2223 the chain carries Phosphoserine. Residue Lys-2256 forms a Glycyl lysine isopeptide (Lys-Gly) (interchain with G-Cter in SUMO2) linkage. Residues 2481 to 2581 are disordered; it reads PSSPHVDSST…NSDSSEDADD (101 aa). Residues 2492-2510 show a composition bias toward basic residues; sequence LHHHHHHPHPHHHHHHHPG. Ser-2519 bears the Phosphoserine mark. Residues 2519-2528 show a composition bias toward polar residues; that stretch reads SPVTTASGTT. The span at 2536-2550 shows a compositional bias: acidic residues; that stretch reads PEEDDDEDEEDDDDL.

It belongs to the SNF2/RAD54 helicase family. CHD8 subfamily. In terms of assembly, interacts with p53/TP53, histone H1, CTNNB1, CTCF and PIAS3. Component of some MLL1/MLL complex, at least composed of the core components KMT2A/MLL1, ASH2L, HCFC1/HCF1, WDR5 and RBBP5, as well as the facultative components BACC1, CHD8, E2F6, HSP70, INO80C, KANSL1, LAS1L, MAX, MCRS1, MGA, KAT8/MOF, PELP1, PHF20, PRP31, RING2, RUVB1/TIP49A, RUVB2/TIP49B, SENP3, TAF1, TAF4, TAF6, TAF7, TAF9 and TEX10. Interacts with CHD7. Interacts with FAM124B. Interacts with TLK2. Interacts with HNRNPL in an RNA-dependent manner. In terms of processing, sumoylated.

The protein resides in the nucleus. The catalysed reaction is ATP + H2O = ADP + phosphate + H(+). In terms of biological role, ATP-dependent chromatin-remodeling factor, it slides nucleosomes along DNA; nucleosome sliding requires ATP. Acts as a transcription repressor by remodeling chromatin structure and recruiting histone H1 to target genes. Suppresses p53/TP53-mediated apoptosis by recruiting histone H1 and preventing p53/TP53 transactivation activity. Acts as a negative regulator of Wnt signaling pathway by regulating beta-catenin (CTNNB1) activity. Negatively regulates CTNNB1-targeted gene expression by being recruited specifically to the promoter regions of several CTNNB1 responsive genes. Involved in both enhancer blocking and epigenetic remodeling at chromatin boundary via its interaction with CTCF. Acts as a suppressor of STAT3 activity by suppressing the LIF-induced STAT3 transcriptional activity. Also acts as a transcription activator via its interaction with ZNF143 by participating in efficient U6 RNA polymerase III transcription. Regulates alternative splicing of a core group of genes involved in neuronal differentiation, cell cycle and DNA repair. Enables H3K36me3-coupled transcription elongation and co-transcriptional RNA processing likely via interaction with HNRNPL. The protein is Chromodomain-helicase-DNA-binding protein 8 of Homo sapiens (Human).